A 392-amino-acid polypeptide reads, in one-letter code: Succinate--CoA ligase [ADP-forming] subunit beta (392 aa).

In terms of domain architecture, ATP-grasp spans 9-248; sequence KGILKQFGVA…ITEEDPLEYE (240 aa). Residues Lys-50, 57–59, Glu-103, Met-106, and Glu-111 each bind ATP; that span reads GRG. Residues Asn-203 and Asp-217 each contribute to the Mg(2+) site. Residues Asn-268 and 325–327 each bind substrate; that span reads GIV.

Belongs to the succinate/malate CoA ligase beta subunit family. As to quaternary structure, heterotetramer of two alpha and two beta subunits. Requires Mg(2+) as cofactor.

The enzyme catalyses succinate + ATP + CoA = succinyl-CoA + ADP + phosphate. The catalysed reaction is GTP + succinate + CoA = succinyl-CoA + GDP + phosphate. It functions in the pathway carbohydrate metabolism; tricarboxylic acid cycle; succinate from succinyl-CoA (ligase route): step 1/1. In terms of biological role, succinyl-CoA synthetase functions in the citric acid cycle (TCA), coupling the hydrolysis of succinyl-CoA to the synthesis of either ATP or GTP and thus represents the only step of substrate-level phosphorylation in the TCA. The beta subunit provides nucleotide specificity of the enzyme and binds the substrate succinate, while the binding sites for coenzyme A and phosphate are found in the alpha subunit. The protein is Succinate--CoA ligase [ADP-forming] subunit beta of Chlorobaculum parvum (strain DSM 263 / NCIMB 8327) (Chlorobium vibrioforme subsp. thiosulfatophilum).